Reading from the N-terminus, the 279-residue chain is Probable endonuclease 4 (279 aa).

Positions 74, 112, 147, 180, 183, 214, 227, 229, and 259 each coordinate Zn(2+).

Belongs to the AP endonuclease 2 family. Zn(2+) serves as cofactor.

The catalysed reaction is Endonucleolytic cleavage to 5'-phosphooligonucleotide end-products.. Endonuclease IV plays a role in DNA repair. It cleaves phosphodiester bonds at apurinic or apyrimidinic (AP) sites, generating a 3'-hydroxyl group and a 5'-terminal sugar phosphate. The chain is Probable endonuclease 4 from Mycoplasma mobile (strain ATCC 43663 / 163K / NCTC 11711) (Mesomycoplasma mobile).